A 536-amino-acid polypeptide reads, in one-letter code: Metal transporter Nramp2 (536 aa).

Residues 1–37 (MSSPSGGEDSKDDEKDEESNRLLPLSSSSQSQSLQSE) are disordered. The segment covering 22 to 36 (LLPLSSSSQSQSLQS) has biased composition (low complexity). A glycan (N-linked (GlcNAc...) asparagine) is linked at asparagine 38. Helical transmembrane passes span 76-96 (LWLF…PGNL), 104-124 (AIAG…GLLI), 161-181 (VALI…IQIL), 185-205 (FLPL…FLFL), 213-233 (LEGV…WMCG), 259-279 (AVGV…SALV), 305-325 (VALF…AKGF), 347-367 (YGGG…AAGQ), 400-420 (SFAI…EASL), 435-455 (IPFA…MGVF), 465-485 (AWTI…DFFI), and 492-512 (LFGF…IYLV).

It belongs to the NRAMP (TC 2.A.55) family.

The protein localises to the membrane. Functionally, probable divalent metal transporter. The protein is Metal transporter Nramp2 of Populus trichocarpa (Western balsam poplar).